A 177-amino-acid chain; its full sequence is Inorganic pyrophosphatase (177 aa).

Residues Lys31, Arg45, and Tyr57 each contribute to the substrate site. Mg(2+)-binding residues include Asp67, Asp72, and Asp104. Position 142 (Tyr142) interacts with substrate.

This sequence belongs to the PPase family. In terms of assembly, homohexamer. The cofactor is Mg(2+).

The protein resides in the cytoplasm. It carries out the reaction diphosphate + H2O = 2 phosphate + H(+). Its function is as follows. Catalyzes the hydrolysis of inorganic pyrophosphate (PPi) forming two phosphate ions. This Neisseria meningitidis serogroup B (strain ATCC BAA-335 / MC58) protein is Inorganic pyrophosphatase.